Consider the following 376-residue polypeptide: Endo-1,4-beta-xylanase A (376 aa).

A signal peptide spans 1–18 (MHLASSLFLLATLPFGFA). The 301-residue stretch at 55–355 (QRERAGLEDK…HPAYYGVVEA (301 aa)) folds into the GH10 domain. The N-linked (GlcNAc...) asparagine glycan is linked to Asn-100. Residue Glu-170 is the Proton donor of the active site. The active-site Nucleophile is the Glu-277. Asn-358 is a glycosylation site (N-linked (GlcNAc...) asparagine).

The protein belongs to the glycosyl hydrolase 10 (cellulase F) family.

It localises to the secreted. The enzyme catalyses Endohydrolysis of (1-&gt;4)-beta-D-xylosidic linkages in xylans.. Its pathway is glycan degradation; xylan degradation. Its activity is regulated as follows. Partial inhibition of activity is detected in the presence of Ag(+), Cu2(+) and SDS. Like most fungal xylanases, activity is completely inhibited by Hg(2+) since Hg(2+) could interact with tryptophan residues and oxidize the indole ring. Beta-mercaptoethanol enhances the enzymatic activity by counteracting the oxidation effects of the S-S linkage between cysteine residues. Endo-1,4-beta-xylanase involved in the hydrolysis of xylan, a major structural heterogeneous polysaccharide found in plant biomass representing the second most abundant polysaccharide in the biosphere, after cellulose. Is most active on birchwood xylan (defined as 100%), moderate on beechwood xylan (96.8%) and soluble wheat arabinoxylan (84.5%), and weak on insoluble wheat arabinoxylan (19.7%). Hydrolyzes substrates into a mixture of xylobiose and xylotriose, but no xylose. No activity was detected in the presence of barley beta-glucan, carboxymethyl cellulose-sodium (CMC-Na), and Avicel. Acts as an alkali-tolerant xylanase, exhibiting 68.8% of the activity at pH 9.0, and even 31.8% at pH 10.0. This is Endo-1,4-beta-xylanase A from Humicola insolens (Soft-rot fungus).